We begin with the raw amino-acid sequence, 307 residues long: MYTNLIFIFKIILEGIIEGVTEFLPVSSTGHMIILGSIIGFKEGAKPVSLYGAEYIHMFEIIIQLGAILAIVVLYWDKIFSALKPSNLFPSMKEHEKSGIGVVGEFFVKGYNTMPGFKFWTNIVVACIPAIVIGLPFQKKIDKLLFFPAPVAAALMVGAVWMIFAENKYRKRAKIKSVDEITIKQAIVIGCFQCLALWPGMSRSASTIIGAWIVGVATVAGAEFSFFLAIPMMLGASLLFLIKNSVVLSSVQILGLAVGFIVAFIVALVVVDRFISFLKKKPMRIFAVYRLAIGIIVLVLGFTKVIS.

8 helical membrane passes run 19 to 41 (GVTE…IIGF), 56 to 76 (IHMF…VLYW), 117 to 137 (FKFW…GLPF), 144 to 164 (LLFF…WMIF), 208 to 228 (IIGA…SFFL), 229 to 249 (AIPM…VVLS), 251 to 271 (VQIL…LVVV), and 285 to 305 (IFAV…FTKV).

The protein belongs to the UppP family.

Its subcellular location is the cell membrane. It carries out the reaction di-trans,octa-cis-undecaprenyl diphosphate + H2O = di-trans,octa-cis-undecaprenyl phosphate + phosphate + H(+). Functionally, catalyzes the dephosphorylation of undecaprenyl diphosphate (UPP). Confers resistance to bacitracin. In Clostridium acetobutylicum (strain ATCC 824 / DSM 792 / JCM 1419 / IAM 19013 / LMG 5710 / NBRC 13948 / NRRL B-527 / VKM B-1787 / 2291 / W), this protein is Undecaprenyl-diphosphatase 2.